Here is a 1627-residue protein sequence, read N- to C-terminus: Pappalysin-1 (1627 aa).

The first 22 residues, 1-22 (MRLWSWVLHLGLLSAALGCGLA), serve as a signal peptide directing secretion. Positions 23 to 81 (ERPRRARRDPRAGRPPRPAAGPATCATRAARGRRASPPPPPPPGGAWEAVRVPRRRQQR) are excised as a propeptide. The disordered stretch occupies residues 23–99 (ERPRRARRDP…PSPPSRALYF (77 aa)). Residues 42–51 (AGPATCATRA) are compositionally biased toward low complexity. 17 cysteine pairs are disulfide-bonded: cysteine 144/cysteine 235, cysteine 327/cysteine 622, cysteine 332/cysteine 657, cysteine 414/cysteine 428, cysteine 424/cysteine 440, cysteine 457/cysteine 473, cysteine 474/cysteine 485, cysteine 583/cysteine 600, cysteine 587/cysteine 612, cysteine 710/cysteine 878, cysteine 713/cysteine 881, cysteine 753/cysteine 835, cysteine 775/cysteine 781, cysteine 947/cysteine 975, cysteine 960/cysteine 971, cysteine 983/cysteine 990, and cysteine 999/cysteine 1011. A metalloprotease region spans residues 272-583 (METHGAHTAL…FRGISEIQSC (312 aa)). Residues asparagine 390 and asparagine 402 are each glycosylated (N-linked (GlcNAc...) asparagine). Asparagine 429 carries N-linked (GlcNAc...) asparagine glycosylation. The N-linked (GlcNAc...) asparagine glycan is linked to asparagine 480. Position 562 (histidine 562) interacts with Zn(2+). Residue glutamate 563 is part of the active site. Histidine 566 and histidine 572 together coordinate Zn(2+). N-linked (GlcNAc...) asparagine glycosylation is found at asparagine 601, asparagine 619, and asparagine 725. The disordered stretch occupies residues 733 to 754 (SPSGHWSPREAEGHPDVEQPCK). The span at 739–751 (SPREAEGHPDVEQ) shows a compositional bias: basic and acidic residues. Asparagine 825 carries an N-linked (GlcNAc...) asparagine glycan. N-linked (GlcNAc...) asparagine glycosylation occurs at asparagine 1026. 19 disulfides stabilise this stretch: cysteine 1036/cysteine 1070, cysteine 1051/cysteine 1139, cysteine 1192/cysteine 1205, cysteine 1215/cysteine 1269, cysteine 1227/cysteine 1238, cysteine 1242/cysteine 1280, cysteine 1285/cysteine 1329, cysteine 1300/cysteine 1310, cysteine 1314/cysteine 1342, cysteine 1346/cysteine 1399, cysteine 1362/cysteine 1373, cysteine 1377/cysteine 1410, cysteine 1415/cysteine 1458, cysteine 1428/cysteine 1438, cysteine 1442/cysteine 1471, cysteine 1478/cysteine 1539, cysteine 1492/cysteine 1502, cysteine 1506/cysteine 1554, and cysteine 1558/cysteine 1576. Sushi domains follow at residues 1213-1282 (TDCP…ACEP), 1283-1344 (VDCS…LCEL), 1345-1412 (MCLA…ACVP), 1413-1473 (VTCD…VCQE), and 1476-1556 (GQCS…HCVK). N-linked (GlcNAc...) asparagine glycosylation is found at asparagine 1222 and asparagine 1226. Asparagine 1323 carries an N-linked (GlcNAc...) asparagine glycan. N-linked (GlcNAc...) asparagine glycosylation occurs at asparagine 1465. Asparagine 1519 is a glycosylation site (N-linked (GlcNAc...) asparagine).

The protein belongs to the peptidase M43B family. Homodimer; disulfide-linked. In pregnancy serum, predominantly found as a disulfide-linked 2:2 heterotetramer with the proform of PRG2. The cofactor is Zn(2+). In terms of processing, there appear to be no free sulfhydryl groups. High levels in placenta and pregnancy serum. In placenta, expressed in X cells in septa and anchoring villi, and in syncytiotrophoblasts in the chorionic villi. Lower levels are found in a variety of other tissues including kidney, myometrium, endometrium, ovaries, breast, prostate, bone marrow, colon, fibroblasts and osteoblasts.

It localises to the secreted. It catalyses the reaction Cleavage of the 135-Met-|-Lys-136 bond in insulin-like growth factor binding protein (IGFBP)-4, and the 143-Ser-|-Lys-144 bond in IGFBP-5.. Inhibited by complexation with the proform of PRG2. Metalloproteinase which specifically cleaves IGFBP-4 and IGFBP-5, resulting in release of bound IGF. Cleavage of IGFBP-4 is dramatically enhanced by the presence of IGF, whereas cleavage of IGFBP-5 is slightly inhibited by the presence of IGF. The sequence is that of Pappalysin-1 (PAPPA) from Homo sapiens (Human).